The chain runs to 164 residues: Oocyte-expressed protein homolog (164 aa).

Residues 44–105 (PLVLYMEAWV…SAQTRMKNIL (62 aa)) enclose the KH; atypical domain.

The protein belongs to the KHDC1 family. As to quaternary structure, component of the subcortical maternal complex (SCMC), at least composed of NLRP5, KHDC3, OOEP, and TLE6. Within the complex, interacts with NLRP5, KHDC3 and TLE6. The SCMC may facilitate translocation of its components between the nuclear and cytoplasmic compartments. As part of the SCMC interacts with the SCMC-associated protein NLRP4F. Forms a scaffold complex with KHDC3/FILIA, and interacts with BLM and TRIM25 at DNA replication forks. As to expression, expressed in ovaries, where it is restricted to growing oocytes, with greatest levels in fully grown oocytes.

The protein localises to the cytoplasm. Its subcellular location is the nucleus. Component of the subcortical maternal complex (SCMC), a multiprotein complex that plays a key role in early embryonic development. The SCMC complex is a structural constituent of cytoplasmic lattices, which consist in fibrous structures found in the cytoplasm of oocytes and preimplantation embryos. They are required to store maternal proteins critical for embryonic development, such as proteins that control epigenetic reprogramming of the preimplantation embryo, and prevent their degradation or activation. As part of the OOEP-KHDC3 scaffold, recruits BLM and TRIM25 to DNA replication forks, thereby promoting the ubiquitination of BLM by TRIM25, enhancing BLM retainment at replication forks and therefore promoting stalled replication fork restart. Positively regulates the homologous recombination-mediated DNA double-strand break (DSB) repair pathway by regulating ATM activation and RAD51 recruitment to DSBs in oocytes. Thereby contributes to oocyte survival and the resumption and completion of meiosis. The sequence is that of Oocyte-expressed protein homolog from Mus musculus (Mouse).